An 81-amino-acid chain; its full sequence is Putative defensin-like protein 148 (81 aa).

Positions 1–24 are cleaved as a signal peptide; it reads MIKSFQLSFTVLIVFTVLILGVVG. Disulfide bonds link C34–C80, C43–C63, C48–C74, and C52–C76.

It belongs to the DEFL family.

It localises to the secreted. In Arabidopsis thaliana (Mouse-ear cress), this protein is Putative defensin-like protein 148 (LCR4).